The following is a 52-amino-acid chain: Dibenzothiophene metabolism operon protein NahQ/DoxH (52 aa).

The protein operates within aromatic compound metabolism; naphthalene degradation. In terms of biological role, may be involved in the conversion of 2-hydroxy-4-(2'-oxo-3,5-cyclohexadienyl)-buta-2,4-dienoate to cis-O-hydroxybenzylidenepyruvate. DoxH and DoxJ encode different enzymes that may have interchangeable functions. The chain is Dibenzothiophene metabolism operon protein NahQ/DoxH (nahQ) from Pseudomonas putida (Arthrobacter siderocapsulatus).